Here is a 419-residue protein sequence, read N- to C-terminus: Dynein regulatory complex protein 9 (419 aa).

2 disordered regions span residues 25–45 and 394–419; these read TGEP…EETS and NFKM…RRKK. A compositionally biased stretch (acidic residues) spans 30-45; it reads EAAEEDLDYEEEEETS. The IQ domain occupies 372–401; sequence ELRSIVKLQAWWRGSVVRKEIGNFKMPKKD. Basic and acidic residues predominate over residues 394–413; the sequence is NFKMPKKDKDDSKDSKGKEK.

Belongs to the DRC9 family. As to quaternary structure, component of the nexin-dynein regulatory complex (N-DRC). Interacts (via IQ domain) with CALM when calcium levels are low. Does not interact with CALM in the presence of Ca(2+). Interacts with the HSP70 proteins HSPA1L and HSPA8. May form a complex with CAMK4 and HSP70. As to expression, expressed in the testes (at protein level). Also detected in oviduct (at protein level). Also detected in the trachea.

The protein resides in the cytoplasm. The protein localises to the cell projection. It is found in the cilium. It localises to the flagellum. Its subcellular location is the cytoskeleton. The protein resides in the flagellum axoneme. Functionally, component of the nexin-dynein regulatory complex (N-DRC), a key regulator of ciliary/flagellar motility which maintains the alignment and integrity of the distal axoneme and regulates microtubule sliding in motile axonemes. Binds calmodulin when cellular Ca(2+) levels are low and thereby contributes to the regulation of calcium and calmodulin-dependent protein kinase IV (CAMK4) activity; contributes to the regulation of CAMK4 signaling cascades. Required for normal axoneme assembly in sperm flagella, normal sperm tail formation and for male fertility. The polypeptide is Dynein regulatory complex protein 9 (Iqcg) (Mus musculus (Mouse)).